We begin with the raw amino-acid sequence, 515 residues long: Protein NRT1/ PTR FAMILY 4.1 (515 aa).

Helical transmembrane passes span 24-44 (GIKA…VFLA), 71-91 (FVGT…SFLT), 93-113 (FAAF…LTLQ), 134-154 (VLFT…GSLP), 168-188 (LISG…FLAV), 204-224 (FTIS…GCPM), 298-318 (FLAL…VAQM), 339-359 (IPVA…LALY), 381-401 (IGYG…VEVK), 413-433 (ISVF…MLTV), 461-481 (AMGF…TGWL), and 492-512 (LFYL…IFWA).

The protein belongs to the major facilitator superfamily. Proton-dependent oligopeptide transporter (POT/PTR) (TC 2.A.17) family. As to expression, expressed in siliques and flowers.

It is found in the membrane. In terms of biological role, involved in (+) and (-)-abscisic acid transport (ABA) and in gibberellin import. This Arabidopsis thaliana (Mouse-ear cress) protein is Protein NRT1/ PTR FAMILY 4.1 (NPF4.1).